An 89-amino-acid polypeptide reads, in one-letter code: Small ribosomal subunit protein uS15 (89 aa).

This sequence belongs to the universal ribosomal protein uS15 family. As to quaternary structure, part of the 30S ribosomal subunit. Forms a bridge to the 50S subunit in the 70S ribosome, contacting the 23S rRNA.

Its function is as follows. One of the primary rRNA binding proteins, it binds directly to 16S rRNA where it helps nucleate assembly of the platform of the 30S subunit by binding and bridging several RNA helices of the 16S rRNA. Functionally, forms an intersubunit bridge (bridge B4) with the 23S rRNA of the 50S subunit in the ribosome. The polypeptide is Small ribosomal subunit protein uS15 (Shouchella clausii (strain KSM-K16) (Alkalihalobacillus clausii)).